A 941-amino-acid chain; its full sequence is MHKRNGPQAPPGRGAVTARQLGLLVDFSPDGLMIPEDGVNDEELEAEFLALVGGQPQALEKLKGKGPLPMEAIEKMARLCMRDLDEDEEGTDEDVEADEDLLAELNEVLGEERKAVEPAMPVVQPKPSSPNPGIEATLQERLILYQSAVESARQAGDSAKMRRYDRGLKTLENLLVSAKKGNTINEADIPPPVASGKGPAIGHSHTHTTSHLAPVSPPAPEPSVTLEAPSTTAQTSAKPQLSPDPCSPLARLQSLQHEYKVAALRAKHQDDTATAARYLRVSKSFDPVLEALSRGELVDLSRLPPPPDQLSPEPPLPAAQPVTPASTLTRPEVPQPPKNLLEALEQRMERYHVAAAQAKAKGDQRKARMHERIVKQYQDAIRAHKAGRAVDVAELPVPPGFPPIQGLESAEPSQQSLVGVLETAMKLANHEEGSDEEEEETPKKNTPAASTAQPKASPSRAPPSGPAPAGKAASKGTSTRAQQQLAFLEGRKKQLLQAALRAKQKNDVEGAKMHLRQAKGLEPMLEASRNGLPVDIAKVPPAPVNKDDFVLVQRPGPGMSQEAVRRYGELTKLLRQQHEMCLNHSTQFTHLGNIAETIKFEKLAEDCKRSMDTLKQAFARSLPTPAARFEQRTFSVIKIFPDLSNNDMLLFIVKGINLPTPPGLSPSDLDAFVRFDFPYPNVEEAQKDKTSVIKSTDSPEFKEQFKLCINRGHRGFRRAIQTKGIKFEVVHKGGLFKTDRVLGTAQLKLDTLETACEVHEILEVLDGRRPTGGRLEVMVRIREPLTAQQLETTTERWLVIDHIPAAVPTVTGPKAKVPLIPASSKEAGNRSSRPLHSLSVLAFDQERLERKILALRQARRPVPPEVAQQYQDVVQRSQWQRAQLEQGGAALRREYASHLERQLHFYTEAARRLGYDGSREAAKEALYRRNLVESELQRLRR.

Phosphothreonine is present on Thr91. Disordered stretches follow at residues Thr183–Pro248 and Ser301–Pro336. Residues Ala228–Pro239 show a composition bias toward polar residues. Ser247 is modified (phosphoserine). Pro residues predominate over residues Leu303–Ala318. The stretch at Lys338 to His384 forms a coiled coil. A disordered region spans residues Ala428–Gln482. At Ser434 the chain carries Phosphoserine. The span at Ala467–Gly476 shows a compositional bias: low complexity. Residues Lys475–Val508 adopt a coiled-coil conformation. One can recognise a C2 domain in the interval Arg628 to Leu762.

Belongs to the CC2D1 family. In terms of tissue distribution, strongly expressed in several brain areas including frontal cortex, cortex, mesencephalon, hippocampus, midbrain and hypothalamus. Also expressed in testis and at low levels in pituitary, liver and kidney. In brain the highest levels are detected in hippocampal pyramidal cells and raphe nuclei.

It is found in the cytoplasm. Its subcellular location is the nucleus. The protein localises to the cytoskeleton. The protein resides in the microtubule organizing center. It localises to the centrosome. Its function is as follows. Transcription factor that binds specifically to the DRE (dual repressor element) and represses 5-HT1A gene transcription though this element. Mediates HDAC-independent repression of HTR1A promoter. CAMK2G inhibits CC2D1a-induced repression of the HTR1A. May play a role in the altered regulation of 5-HT1A receptors associated with anxiety and major depression. Performs essential function in controlling functional maturation of synapses. In Rattus norvegicus (Rat), this protein is Coiled-coil and C2 domain-containing protein 1A (Cc2d1a).